Reading from the N-terminus, the 308-residue chain is 34.2 kDa protein in rubredoxin operon (308 aa).

An intrachain disulfide couples C136 to C139. 268-278 (TNIKGVFAAGD) is a binding site for FAD.

Belongs to the class-II pyridine nucleotide-disulfide oxidoreductase family.

This Clostridium pasteurianum protein is 34.2 kDa protein in rubredoxin operon.